We begin with the raw amino-acid sequence, 483 residues long: MLTADSLNLILAISEGELVEEIVIALLASPQLAVFFEKFPRLKHALTQDIPRWREQLKTRLKEAHVPPELEEEVIGYQKSQLLSTSQFIVQLPQISALLRRVGSPFADQAQRLIADNPHFTPALHTLFLQRWRLSLVVQATSFNQQLLEEEREQLLSEVQERMTLSGQLEQVLVENEDSAGRLWDMSDGKLRRGDYQLIVKYGDFLADQPELMQLAEQLGRSREAKSVPKKEAPLETFRTLVREPASVPEQVDGLQRSDDILRLLPPELATLGITELEYEFYRRLVEKQLLTYRLQGDAWREKVMQRPVTRQDYDEQPRGPFIVCVDTSGSMGGFNEQCAKAFCLALMRIALADNRRCFIMLFSSEVVRYELCGRDGIEQAIRFLSQRFRGGTDLASCFRAIAEKLQGGEWFDADAVVVSDFIAQRLPDEVVNKVKELQRVHQHRFHAVAMSAHGKPGIMRIFDHIWRFDTGMRSRLVRRLRR.

It belongs to the ViaA family. Homodimer. Interacts with RavA.

The protein localises to the cytoplasm. Its function is as follows. Component of the RavA-ViaA chaperone complex, which may act on the membrane to optimize the function of some of the respiratory chains. ViaA stimulates the ATPase activity of RavA. The protein is Regulatory protein ViaA of Cronobacter sakazakii (strain ATCC BAA-894) (Enterobacter sakazakii).